A 592-amino-acid polypeptide reads, in one-letter code: RNA-binding protein 47 (592 aa).

Residues 1 to 24 (MTAEDAAAAMSSDSAAGGAASAKA) show a composition bias toward low complexity. The disordered stretch occupies residues 1–26 (MTAEDAAAAMSSDSAAGGAASAKAPE). 3 consecutive RRM domains span residues 73–151 (CEVF…CSVD), 153–235 (CRLF…WAEP), and 248–320 (KILY…LAKP). Arg397 and Arg408 each carry asymmetric dimethylarginine; alternate. Omega-N-methylarginine; alternate occurs at positions 397 and 408.

It belongs to the RRM RBM47 family. As to quaternary structure, homodimer. Interacts with A1CF. Interacts with APOBEC1; form an mRNA editing complex. Interacts with RBPMS.

It localises to the nucleus. The protein localises to the cytoplasm. Functionally, single-stranded RNA-binding protein that functions in a variety of RNA processes, including alternative splicing, RNA stabilization, and RNA editing. Functions as an enzyme-substrate adapter for the cytidine deaminase APOBEC1. With APOBEC1 forms an mRNA editing complex involved into cytidine to uridine editing of a variety of mRNA molecules. Through the binding of their 3'UTR, also stabilizes a variety of mRNAs and regulates the expression of genes such as the interferon alpha/beta receptor and interleukin-10. Also involved in the alternative splicing of several genes including TJP1. Binds the pre-mRNA (U)GCAUG consensus sequences in downstream intronic regions of alternative exons, regulating their exclusion and inclusion into mRNAs. Independently of its RNA-binding activity, could negatively regulate MAVS by promoting its lysosomal degradation. This is RNA-binding protein 47 from Canis lupus familiaris (Dog).